A 102-amino-acid polypeptide reads, in one-letter code: Small ribosomal subunit protein uS10 (102 aa).

This sequence belongs to the universal ribosomal protein uS10 family. Part of the 30S ribosomal subunit.

In terms of biological role, involved in the binding of tRNA to the ribosomes. The sequence is that of Small ribosomal subunit protein uS10 from Rhodopseudomonas palustris (strain HaA2).